Reading from the N-terminus, the 419-residue chain is Gamma-glutamyl phosphate reductase (419 aa).

Belongs to the gamma-glutamyl phosphate reductase family.

Its subcellular location is the cytoplasm. The enzyme catalyses L-glutamate 5-semialdehyde + phosphate + NADP(+) = L-glutamyl 5-phosphate + NADPH + H(+). It functions in the pathway amino-acid biosynthesis; L-proline biosynthesis; L-glutamate 5-semialdehyde from L-glutamate: step 2/2. Functionally, catalyzes the NADPH-dependent reduction of L-glutamate 5-phosphate into L-glutamate 5-semialdehyde and phosphate. The product spontaneously undergoes cyclization to form 1-pyrroline-5-carboxylate. This chain is Gamma-glutamyl phosphate reductase, found in Nitratidesulfovibrio vulgaris (strain DP4) (Desulfovibrio vulgaris).